Here is a 244-residue protein sequence, read N- to C-terminus: Cobalt transport protein CbiM (244 aa).

Positions 1–27 (MVEGMLKTNFRLLFLLIFLLIPTPVLA) are cleaved as a signal peptide. Helical transmembrane passes span 36 to 56 (PVKW…VGFI), 65 to 85 (GPGA…LSAL), 102 to 122 (LAAI…VLIF), 134 to 154 (TLGA…YGVY), 168 to 188 (IFLA…VQLA), and 196 to 216 (LFLS…PLAI).

This sequence belongs to the CbiM family. As to quaternary structure, forms an energy-coupling factor (ECF) transporter complex composed of an ATP-binding protein (A component, CbiO), a transmembrane protein (T component, CbiQ) and 2 possible substrate-capture proteins (S components, CbiM and CbiN) of unknown stoichimetry.

It is found in the cell membrane. Its pathway is cofactor biosynthesis; adenosylcobalamin biosynthesis. Part of the energy-coupling factor (ECF) transporter complex CbiMNOQ involved in cobalt import. The sequence is that of Cobalt transport protein CbiM from Carboxydothermus hydrogenoformans (strain ATCC BAA-161 / DSM 6008 / Z-2901).